The primary structure comprises 182 residues: Adenine phosphoribosyltransferase (182 aa).

This sequence belongs to the purine/pyrimidine phosphoribosyltransferase family. As to quaternary structure, homodimer.

It is found in the cytoplasm. The enzyme catalyses AMP + diphosphate = 5-phospho-alpha-D-ribose 1-diphosphate + adenine. It functions in the pathway purine metabolism; AMP biosynthesis via salvage pathway; AMP from adenine: step 1/1. Catalyzes a salvage reaction resulting in the formation of AMP, that is energically less costly than de novo synthesis. The polypeptide is Adenine phosphoribosyltransferase (Pseudomonas entomophila (strain L48)).